Reading from the N-terminus, the 788-residue chain is MGSGGVIHCRCAKCFCYPSKRRIRRRPRNLTILNLPEDALFHILKWLSVGDILAVRAVHSHLKYLVDNHASVWACASFQELWPSPGNLKLFERAAEKGNFEAAVKLGIAYLYNEGLSVSDEARAEVNGLRASRYFSLAERLNVGAAPFIWLFIRPPWSVSGSCCKAVVHESLRAECQLQKTHRASILHCLGRVLSLFEDEEKQKQARKLFEESANQGCLTSSYLLWESDRRMDMLDPGRCLHSFRKLRDFAAKGCWEAQLSLAKACAHGHQLGLEAKASSEIVCQLFQASHAVNKQRVFSVQKGLNDTMRYILIDWLVEVATMKDFSSLCLHLTVECVDRYLRRRLVPRYRLQLLGIACMVICTRFISKEILTIREAVWLTDNTYKYEDLVRMMGEVVSALDGKIRVPTVVDYKDVLLTLVPMAPRTQHLCSFLCELSLLHTSLAAYAPAHLAAAALLLARLTHGQTQPWTTQLWDLTGFSCEDLIPCVLSLHQKCFHDDAPKDYRQVSLTAVKQRFEDKRYEEISLEEVLSYGQLCAALGVKQESLEPAPFLSAGDIHAFLSSPSARRTKRKRENSLQEDRGSFVTTPTAELSSQEETLLGSFLDWSLDYCSGYEGDQESEGEKEGDVTAPSGVLDVTVVYLSPEEHCCQESSDEEACPEEACGAQDTQALVPGHQALRTPGPEPPLCSRWGLGKDVTTSGYSSVNSASPTDSGRTSGGPPRSTSELPTGSSLNTQPCHHHARKSCLQCRPPSPPESCAPQQQVKRKNLSAHSEEEEEDMNLGFLKL.

Positions lysine 20–arginine 28 match the Nuclear localization signal 1 motif. One can recognise an F-box domain in the interval asparagine 29–alanine 76. The region spanning histidine 291–isoleucine 405 is the Cyclin N-terminal domain. 4 short sequence motifs (d box) span residues arginine 310–leucine 313, arginine 343–leucine 346, arginine 349–leucine 352, and arginine 351–leucine 354. 2 disordered regions span residues serine 566–phenylalanine 585 and threonine 700–leucine 788. The Nuclear localization signal 2 signature appears at arginine 568–arginine 574. A PEST region spans residues arginine 582–lysine 766. Polar residues-rich tracts occupy residues threonine 700–arginine 716 and arginine 723–proline 738. Positions arginine 767–leucine 770 match the D box 5 motif.

It belongs to the cyclin family. Cyclin AB subfamily. In terms of assembly, component of the SCF(CCNF) complex consisting of CUL1, RBX1, SKP1 and CCNF. Interacts with SKP1. Interacts with CUL1. Interacts with CCNB1; interaction is required for nuclear localization of CCNB1. Interacts with CCP110; this interaction leads to CCP110 ubiquitination and degradation via the proteasome pathway. Interacts (via the Cyclin N-terminal domain) with MYBL2/BMYB. Interacts with FZR1/CDH1 (via N-terminus). Interacts with RRM2 (via Cy motif and when phosphorylated at 'Thr-33'); the interaction occurs exclusively in G2 and early M. Interacts with CDC6 (via Cy motif); the interaction takes place during G2 and M phase. In terms of processing, degraded when the spindle assembly checkpoint is activated during the G2-M transition. Degradation is not dependent on the proteasome or ubiquitin and depends on the C-terminal PEST sequence. Post-translationally, phosphorylated just before cells enter into mitosis. Ubiquitinated by the anaphase-promoting complex (APC/C); leading to its degradation by the proteasome.

The protein resides in the nucleus. It localises to the cytoplasm. It is found in the perinuclear region. The protein localises to the cytoskeleton. Its subcellular location is the microtubule organizing center. The protein resides in the centrosome. It localises to the centriole. Its function is as follows. Substrate recognition component of a SCF (SKP1-CUL1-F-box protein) E3 ubiquitin-protein ligase complex which mediates the ubiquitination and subsequent proteasomal degradation of target proteins. The SCF(CCNF) E3 ubiquitin-protein ligase complex is an integral component of the ubiquitin proteasome system (UPS) and links proteasome degradation to the cell cycle. Mediates the substrate recognition and the proteasomal degradation of various target proteins involved in the regulation of cell cycle progression and in the maintenance of genome stability. Mediates the ubiquitination and subsequent proteasomal degradation of CP110 during G2 phase, thereby acting as an inhibitor of centrosome reduplication. In G2, mediates the ubiquitination and proteasomal degradation of CDC6, thereby suppressing DNA re-replication and preventing genome instability. Involved in the ubiquitination and degradation of the substrate adapter CDH1 of the anaphase-promoting complex (APC/C), thereby acting as an antagonist of APC/C in regulating G1 progression and S phase entry. May play a role in the G2 cell cycle checkpoint control after DNA damage, possibly by promoting the ubiquitination of MYBL2/BMYB. This Bos taurus (Bovine) protein is Cyclin-F (CCNF).